The primary structure comprises 699 residues: Elongation factor G (699 aa).

The tr-type G domain maps to 8–288; it reads EDYRNFGIMA…AVVDYLPSPL (281 aa). Residues 17-24, 86-90, and 140-143 each bind GTP; these read AHIDAGKT, DTPGH, and NKMD.

Belongs to the TRAFAC class translation factor GTPase superfamily. Classic translation factor GTPase family. EF-G/EF-2 subfamily.

It is found in the cytoplasm. In terms of biological role, catalyzes the GTP-dependent ribosomal translocation step during translation elongation. During this step, the ribosome changes from the pre-translocational (PRE) to the post-translocational (POST) state as the newly formed A-site-bound peptidyl-tRNA and P-site-bound deacylated tRNA move to the P and E sites, respectively. Catalyzes the coordinated movement of the two tRNA molecules, the mRNA and conformational changes in the ribosome. This is Elongation factor G from Rhizobium etli (strain ATCC 51251 / DSM 11541 / JCM 21823 / NBRC 15573 / CFN 42).